Consider the following 296-residue polypeptide: NADPH-dependent 1-acyldihydroxyacetone phosphate reductase (296 aa).

Residue Ile9 coordinates NADP(+). The GXSXG motif lies at 11–15; that stretch reads GCSEG. Positions 35, 41, 56, 84, 117, 148, 152, 181, and 183 each coordinate NADP(+). Tyr148 serves as the catalytic Proton donor. Lys152 serves as the catalytic Lowers pKa of active site Tyr.

Belongs to the short-chain dehydrogenases/reductases (SDR) family.

It is found in the lipid droplet. It localises to the cytoplasm. Its subcellular location is the vacuole. The protein resides in the endoplasmic reticulum. The protein localises to the golgi apparatus. It is found in the mitochondrion outer membrane. The catalysed reaction is 1-hexadecanoyl-sn-glycero-3-phosphate + NADP(+) = 1-hexadecanoylglycerone 3-phosphate + NADPH + H(+). It carries out the reaction a 1-acylglycerone 3-phosphate + NADPH + H(+) = a 1-acyl-sn-glycero-3-phosphate + NADP(+). It catalyses the reaction a triacylglycerol + H2O = a diacylglycerol + a fatty acid + H(+). Functionally, can convert acyl and alkyl dihydroxyacetone-phosphate (DHAP) into glycerolipids and ether lipids, respectively. Required for the biosynthesis of phosphatidic acid via the DHAP pathway, where it reduces 1-acyl DHAP to lysophosphatidic acid (LPA). Also has triacylglycerol (TAG) lipase activity. Involved in the mobilization of the non-polar storage lipids triacylglycerols (TAGs) from lipid particles by hydrolysis of TAGs. Lipolysis of TAG by AYR1 is essential for starvation-induced autophagy. Forms an NADPH-regulated cation-selective channel in the mitochondrial outer membrane. This chain is NADPH-dependent 1-acyldihydroxyacetone phosphate reductase (ayr1), found in Schizosaccharomyces pombe (strain 972 / ATCC 24843) (Fission yeast).